The chain runs to 164 residues: MSLNIEDKKAVVAEVSAQLAEAQTLVIAEYRGIEVSSMTKLRAQARENGVYLRVLKNTLVRRAVEGTPFAGLADQMVGPLVYAVSADPVAAAKVLHQFAKADDKIIVKAGSYDGQVLNAAQVAELASIPSREELLSKLLYVMQAPVAGFARALAALAEKQAEAA.

It belongs to the universal ribosomal protein uL10 family. In terms of assembly, part of the ribosomal stalk of the 50S ribosomal subunit. The N-terminus interacts with L11 and the large rRNA to form the base of the stalk. The C-terminus forms an elongated spine to which L12 dimers bind in a sequential fashion forming a multimeric L10(L12)X complex.

Forms part of the ribosomal stalk, playing a central role in the interaction of the ribosome with GTP-bound translation factors. This chain is Large ribosomal subunit protein uL10, found in Chromobacterium violaceum (strain ATCC 12472 / DSM 30191 / JCM 1249 / CCUG 213 / NBRC 12614 / NCIMB 9131 / NCTC 9757 / MK).